A 173-amino-acid chain; its full sequence is Large ribosomal subunit protein uL16 (173 aa).

Belongs to the universal ribosomal protein uL16 family.

This is Large ribosomal subunit protein uL16 from Methanococcus maripaludis (strain DSM 14266 / JCM 13030 / NBRC 101832 / S2 / LL).